The sequence spans 232 residues: Probable fimbrial chaperone LpfB (232 aa).

An N-terminal signal peptide occupies residues M1 to A24.

It belongs to the periplasmic pilus chaperone family.

Its subcellular location is the periplasm. In terms of biological role, part of the lpfABCC'DE fimbrial operon. LP fimbriae may participate in the interaction with eukaryotic cells by assisting in microcolony formation. This chain is Probable fimbrial chaperone LpfB (lpfB), found in Escherichia coli O157:H7.